The primary structure comprises 199 residues: ATP-dependent Clp protease proteolytic subunit (199 aa).

The active-site Nucleophile is the Ser98. The active site involves His123.

This sequence belongs to the peptidase S14 family. In terms of assembly, fourteen ClpP subunits assemble into 2 heptameric rings which stack back to back to give a disk-like structure with a central cavity, resembling the structure of eukaryotic proteasomes.

Its subcellular location is the cytoplasm. The catalysed reaction is Hydrolysis of proteins to small peptides in the presence of ATP and magnesium. alpha-casein is the usual test substrate. In the absence of ATP, only oligopeptides shorter than five residues are hydrolyzed (such as succinyl-Leu-Tyr-|-NHMec, and Leu-Tyr-Leu-|-Tyr-Trp, in which cleavage of the -Tyr-|-Leu- and -Tyr-|-Trp bonds also occurs).. Cleaves peptides in various proteins in a process that requires ATP hydrolysis. Has a chymotrypsin-like activity. Plays a major role in the degradation of misfolded proteins. This is ATP-dependent Clp protease proteolytic subunit from Clostridium botulinum (strain Alaska E43 / Type E3).